Consider the following 630-residue polypeptide: Tyrosinase (630 aa).

Cu cation contacts are provided by His-69, His-92, His-101, His-317, His-321, and His-360. The 2'-(S-cysteinyl)-histidine (Cys-His) cross-link spans 90-92 (CVH).

This sequence belongs to the tyrosinase family. Requires Cu(2+) as cofactor.

The catalysed reaction is 2 L-dopa + O2 = 2 L-dopaquinone + 2 H2O. It catalyses the reaction L-tyrosine + O2 = L-dopaquinone + H2O. Functionally, this is a copper-containing oxidase that functions in the formation of pigments such as melanins and other polyphenolic compounds. This is Tyrosinase (tyr1) from Aspergillus fumigatus (strain ATCC MYA-4609 / CBS 101355 / FGSC A1100 / Af293) (Neosartorya fumigata).